A 109-amino-acid chain; its full sequence is Cytochrome c oxidase subunit 6A1, mitochondrial (109 aa).

Residues 1–24 (MAAAAGSRVFGLLGRSRLQLSRCM) constitute a mitochondrion transit peptide. The Mitochondrial matrix portion of the chain corresponds to 25 to 34 (SSGAHGEEGS). Residues 35 to 59 (ARMWKALTYFVALPGVGVSMLNVFL) traverse the membrane as a helical segment. Residues 60 to 109 (KSHHGEEERPEFVAYPHLRIRSKPFPWGDGNHTLFHNPHVNPLPTGYEDE) lie on the Mitochondrial intermembrane side of the membrane.

The protein belongs to the cytochrome c oxidase subunit 6A family. As to quaternary structure, component of the cytochrome c oxidase (complex IV, CIV), a multisubunit enzyme composed of 14 subunits. The complex is composed of a catalytic core of 3 subunits MT-CO1, MT-CO2 and MT-CO3, encoded in the mitochondrial DNA, and 11 supernumerary subunits COX4I1 (or COX4I2), COX5A, COX5B, COX6A2 (or COX6A1), COX6B1 (or COX6B2), COX6C, COX7A1 (or COX7A2), COX7B, COX7C, COX8B and NDUFA4, which are encoded in the nuclear genome. The complex exists as a monomer or a dimer and forms supercomplexes (SCs) in the inner mitochondrial membrane with NADH-ubiquinone oxidoreductase (complex I, CI) and ubiquinol-cytochrome c oxidoreductase (cytochrome b-c1 complex, complex III, CIII), resulting in different assemblies (supercomplex SCI(1)III(2)IV(1) and megacomplex MCI(2)III(2)IV(2)).

Its subcellular location is the mitochondrion inner membrane. The protein operates within energy metabolism; oxidative phosphorylation. Functionally, component of the cytochrome c oxidase, the last enzyme in the mitochondrial electron transport chain which drives oxidative phosphorylation. The respiratory chain contains 3 multisubunit complexes succinate dehydrogenase (complex II, CII), ubiquinol-cytochrome c oxidoreductase (cytochrome b-c1 complex, complex III, CIII) and cytochrome c oxidase (complex IV, CIV), that cooperate to transfer electrons derived from NADH and succinate to molecular oxygen, creating an electrochemical gradient over the inner membrane that drives transmembrane transport and the ATP synthase. Cytochrome c oxidase is the component of the respiratory chain that catalyzes the reduction of oxygen to water. Electrons originating from reduced cytochrome c in the intermembrane space (IMS) are transferred via the dinuclear copper A center (CU(A)) of subunit 2 and heme A of subunit 1 to the active site in subunit 1, a binuclear center (BNC) formed by heme A3 and copper B (CU(B)). The BNC reduces molecular oxygen to 2 water molecules unsing 4 electrons from cytochrome c in the IMS and 4 protons from the mitochondrial matrix. The protein is Cytochrome c oxidase subunit 6A1, mitochondrial (COX6A1) of Bos taurus (Bovine).